We begin with the raw amino-acid sequence, 35 residues long: Non-specific lipid-transfer protein 1 (35 aa).

A disulfide bond links Cys13 and Cys28.

In terms of tissue distribution, seeds.

Functionally, plant non-specific lipid-transfer proteins transfer phospholipids as well as galactolipids across membranes. May play a role in wax or cutin deposition in the cell walls of expanding epidermal cells and certain secretory tissues. Inhibits the growth of F.oxysporum and P.infestans. This chain is Non-specific lipid-transfer protein 1, found in Nigella sativa (Black cumin).